Consider the following 398-residue polypeptide: MKQLTILGSTGSIGCSTLDVVRHNPDSFRVIALVAGKNVARMAEQCLEFSPRYAVMDDTSSAEQLKIMLQQHGSRTEVLSGQQAACEMAALDEVGHVMAAIVGAAGLLPTLAAIRAGKTILLANKESLVTCGRLFMDEVKRSNARLLPVDSEHNAIFQSLPQSIQHNLGYADLEQNGVTSILLTGSGGPFRETPMCDLAAMTPDQACRHPNWSMGRKVSVDSATMMNKGLEYIEARWLFNASARQMEVLIHPQSVIHSMVRYQDGSVLAQLGEPDMRTPIAHTMAWPNRVTSGAQPLDFCKLSALTFSAPDYQRYPCLKLAMEAFEQGQAATTALNAANEITVAAFLAQQIRFTDIAGLNLAVLERMDLQEPASVEDVLQVDAIAREVARKQVIRLSR.

NADPH-binding residues include T10, G11, S12, I13, G36, K37, N38, and N124. K125 is a 1-deoxy-D-xylulose 5-phosphate binding site. An NADPH-binding site is contributed by E126. D150 is a Mn(2+) binding site. Positions 151, 152, 186, and 209 each coordinate 1-deoxy-D-xylulose 5-phosphate. A Mn(2+)-binding site is contributed by E152. Residue G215 participates in NADPH binding. 1-deoxy-D-xylulose 5-phosphate is bound by residues S222, N227, K228, and E231. E231 contacts Mn(2+).

Belongs to the DXR family. As to quaternary structure, homodimer. Mg(2+) is required as a cofactor. The cofactor is Mn(2+).

It carries out the reaction 2-C-methyl-D-erythritol 4-phosphate + NADP(+) = 1-deoxy-D-xylulose 5-phosphate + NADPH + H(+). Its pathway is isoprenoid biosynthesis; isopentenyl diphosphate biosynthesis via DXP pathway; isopentenyl diphosphate from 1-deoxy-D-xylulose 5-phosphate: step 1/6. Its function is as follows. Catalyzes the NADPH-dependent rearrangement and reduction of 1-deoxy-D-xylulose-5-phosphate (DXP) to 2-C-methyl-D-erythritol 4-phosphate (MEP). This is 1-deoxy-D-xylulose 5-phosphate reductoisomerase from Salmonella choleraesuis (strain SC-B67).